A 174-amino-acid polypeptide reads, in one-letter code: Co-chaperone protein HscB homolog (174 aa).

The J domain maps to 2–74; that stretch reads NYFELFKFSP…IRRAEHMLSL (73 aa).

This sequence belongs to the HscB family. Interacts with HscA and stimulates its ATPase activity.

In terms of biological role, co-chaperone involved in the maturation of iron-sulfur cluster-containing proteins. Seems to help targeting proteins to be folded toward HscA. The protein is Co-chaperone protein HscB homolog of Shewanella baltica (strain OS185).